Here is a 301-residue protein sequence, read N- to C-terminus: Amylovoran biosynthesis glycosyltransferase AmsB (301 aa).

This sequence belongs to the glycosyltransferase 2 family.

It functions in the pathway glycan metabolism; exopolysaccharide biosynthesis. Its function is as follows. Involved in the biosynthesis of amylovoran, which functions as a virulence factor. May function as a glycosyl transferase which transfers galactose from UDP-galactose to a lipid-linked amylovoran-subunit precursor. The chain is Amylovoran biosynthesis glycosyltransferase AmsB (amsB) from Erwinia amylovora (Fire blight bacteria).